Consider the following 737-residue polypeptide: Transcription termination factor Rho (737 aa).

Residues 1–396 (MSGPCSAHRV…ENSYLPDPTD (396 aa)) are disordered. Low complexity-rich tracts occupy residues 16 to 28 (RPTI…TRSS), 62 to 86 (ASRA…GSDA), and 101 to 111 (DAESAPTAADT). Basic and acidic residues-rich tracts occupy residues 145 to 175 (PRAE…HESR), 196 to 256 (SMER…DRRD), 266 to 279 (GRPD…DRHQ), and 286 to 324 (DRSH…DRGG). Positions 328–339 (RNGRRGRNRFRR) are enriched in basic residues. Positions 347–360 (APISGSHAPSQGSP) are enriched in polar residues. The 73-residue stretch at 367–439 (EGTMAGWFDP…IEVQTLNDGS (73 aa)) folds into the Rho RNA-BD domain. Residues 376–387 (PSRDGGFLRRPE) show a composition bias toward basic and acidic residues. ATP-binding positions include 487 to 492 (GYGQRA), 499 to 504 (RAGKTT), and Arg530.

It belongs to the Rho family. In terms of assembly, homohexamer. The homohexamer assembles into an open ring structure.

Its function is as follows. Facilitates transcription termination by a mechanism that involves Rho binding to the nascent RNA, activation of Rho's RNA-dependent ATPase activity, and release of the mRNA from the DNA template. This is Transcription termination factor Rho from Gemmatimonas aurantiaca (strain DSM 14586 / JCM 11422 / NBRC 100505 / T-27).